The chain runs to 452 residues: GPI mannosyltransferase 2 (452 aa).

The Cytoplasmic segment spans residues M1–K7. The helical transmembrane segment at L8–P28 threads the bilayer. At D29 to A113 the chain is on the lumenal side. A helical membrane pass occupies residues L114 to L134. Residues Y135 to S161 are Cytoplasmic-facing. The helical transmembrane segment at I162–L182 threads the bilayer. The Lumenal segment spans residues E183–N209. A helical membrane pass occupies residues G210–G230. Residues S231–L238 are Cytoplasmic-facing. The helical transmembrane segment at F239–I259 threads the bilayer. Topologically, residues Y260 to S284 are lumenal. A helical transmembrane segment spans residues F285–P305. The Cytoplasmic portion of the chain corresponds to Y306–L327. The helical transmembrane segment at P328–I348 threads the bilayer. Over R349–E370 the chain is Lumenal. Residues H371–V391 traverse the membrane as a helical segment. Residues H392–R398 lie on the Cytoplasmic side of the membrane. Residues L399 to F419 form a helical membrane-spanning segment. Residues Q420–K426 are Lumenal-facing. A helical membrane pass occupies residues A427–N447. Residues N448–T452 are Cytoplasmic-facing.

Belongs to the PIGV family.

It is found in the endoplasmic reticulum membrane. Its pathway is glycolipid biosynthesis; glycosylphosphatidylinositol-anchor biosynthesis. Mannosyltransferase involved in glycosylphosphatidylinositol-anchor biosynthesis. Transfers the second mannose to the glycosylphosphatidylinositol during GPI precursor assembly. Required for the GPI-mediated endoplasmic reticulum exit and proper targeting to the cell surface of chp. Required for GPI-mediated membrane attachment of chp, qsm and Cont. Essential for microvillar stability in the rhabdomere. The chain is GPI mannosyltransferase 2 from Drosophila pseudoobscura pseudoobscura (Fruit fly).